The sequence spans 216 residues: Protein-L-isoaspartate O-methyltransferase (216 aa).

Ser-60 is an active-site residue.

The protein belongs to the methyltransferase superfamily. L-isoaspartyl/D-aspartyl protein methyltransferase family.

It localises to the cytoplasm. It catalyses the reaction [protein]-L-isoaspartate + S-adenosyl-L-methionine = [protein]-L-isoaspartate alpha-methyl ester + S-adenosyl-L-homocysteine. Functionally, catalyzes the methyl esterification of L-isoaspartyl residues in peptides and proteins that result from spontaneous decomposition of normal L-aspartyl and L-asparaginyl residues. It plays a role in the repair and/or degradation of damaged proteins. The chain is Protein-L-isoaspartate O-methyltransferase from Methanococcus aeolicus (strain ATCC BAA-1280 / DSM 17508 / OCM 812 / Nankai-3).